A 435-amino-acid polypeptide reads, in one-letter code: ATP-dependent RNA helicase RhlB (435 aa).

A Q motif motif is present at residues 9 to 37 (QKFADLGLNPQVVEGLEKKGFEFCTPIQA). The Helicase ATP-binding domain maps to 40 to 219 (LPVLLSGQDI…FEHMHNPEHV (180 aa)). 53–60 (AQTGTGKT) is an ATP binding site. The DEAD box signature appears at 165-168 (DEAD). Residues 245-390 (ALLQTLIEEE…VSDYDSSALI (146 aa)) enclose the Helicase C-terminal domain. The tract at residues 395 to 435 (APVRTPSARNQQRRTNTGGARSGDRKSNNRRPRQPRQHKEA) is disordered. Over residues 401–413 (SARNQQRRTNTGG) the composition is skewed to polar residues. Over residues 422–435 (NNRRPRQPRQHKEA) the composition is skewed to basic residues.

Belongs to the DEAD box helicase family. RhlB subfamily. As to quaternary structure, component of the RNA degradosome, which is a multiprotein complex involved in RNA processing and mRNA degradation.

The protein localises to the cytoplasm. The enzyme catalyses ATP + H2O = ADP + phosphate + H(+). Its function is as follows. DEAD-box RNA helicase involved in RNA degradation. Has RNA-dependent ATPase activity and unwinds double-stranded RNA. The protein is ATP-dependent RNA helicase RhlB of Vibrio vulnificus (strain CMCP6).